We begin with the raw amino-acid sequence, 546 residues long: (-)-5-epieremophilene synthase STPS1 (546 aa).

D299, D303, D442, T446, and E450 together coordinate Mg(2+). Residues 299–303 (DDTYD) carry the DDXXD motif motif.

Belongs to the terpene synthase family. Tpsa subfamily. Monomer. Requires Mg(2+) as cofactor. In terms of tissue distribution, highly expressed in leaves and at lower levels in flowers.

The catalysed reaction is (2E,6E)-farnesyl diphosphate = (-)-5-epi-eremophilene + diphosphate. Its pathway is secondary metabolite biosynthesis; terpenoid biosynthesis. Its function is as follows. Sesquiterpene synthase that catalyzes the conversion of farnesyl diphosphate to (-)-5-epi-eremophilene. In Salvia miltiorrhiza (Chinese sage), this protein is (-)-5-epieremophilene synthase STPS1.